The following is a 420-amino-acid chain: Glucose-1-phosphate adenylyltransferase (420 aa).

Residues Tyr-107, Gly-173, 188-189 (EK), and Ser-206 each bind alpha-D-glucose 1-phosphate.

It belongs to the bacterial/plant glucose-1-phosphate adenylyltransferase family. In terms of assembly, homotetramer.

The enzyme catalyses alpha-D-glucose 1-phosphate + ATP + H(+) = ADP-alpha-D-glucose + diphosphate. It participates in glycan biosynthesis; glycogen biosynthesis. In terms of biological role, involved in the biosynthesis of ADP-glucose, a building block required for the elongation reactions to produce glycogen. Catalyzes the reaction between ATP and alpha-D-glucose 1-phosphate (G1P) to produce pyrophosphate and ADP-Glc. In Shewanella sp. (strain ANA-3), this protein is Glucose-1-phosphate adenylyltransferase.